Reading from the N-terminus, the 113-residue chain is Ig heavy chain V-III region T957 (113 aa).

Positions 1 to 113 (EVKLEESGGG…YWGQGTLVTV (113 aa)) constitute an Ig-like domain. Cys-22 and Cys-98 form a disulfide bridge.

In Mus musculus (Mouse), this protein is Ig heavy chain V-III region T957.